The primary structure comprises 374 residues: Putative glutamate--cysteine ligase 2 (374 aa).

This sequence belongs to the glutamate--cysteine ligase type 2 family. YbdK subfamily.

The catalysed reaction is L-cysteine + L-glutamate + ATP = gamma-L-glutamyl-L-cysteine + ADP + phosphate + H(+). Functionally, ATP-dependent carboxylate-amine ligase which exhibits weak glutamate--cysteine ligase activity. This is Putative glutamate--cysteine ligase 2 from Acidovorax ebreus (strain TPSY) (Diaphorobacter sp. (strain TPSY)).